A 505-amino-acid chain; its full sequence is Aspartyl/glutamyl-tRNA(Asn/Gln) amidotransferase subunit B (505 aa).

This sequence belongs to the GatB/GatE family. GatB subfamily. In terms of assembly, heterotrimer of A, B and C subunits.

It catalyses the reaction L-glutamyl-tRNA(Gln) + L-glutamine + ATP + H2O = L-glutaminyl-tRNA(Gln) + L-glutamate + ADP + phosphate + H(+). The catalysed reaction is L-aspartyl-tRNA(Asn) + L-glutamine + ATP + H2O = L-asparaginyl-tRNA(Asn) + L-glutamate + ADP + phosphate + 2 H(+). Its function is as follows. Allows the formation of correctly charged Asn-tRNA(Asn) or Gln-tRNA(Gln) through the transamidation of misacylated Asp-tRNA(Asn) or Glu-tRNA(Gln) in organisms which lack either or both of asparaginyl-tRNA or glutaminyl-tRNA synthetases. The reaction takes place in the presence of glutamine and ATP through an activated phospho-Asp-tRNA(Asn) or phospho-Glu-tRNA(Gln). This Dinoroseobacter shibae (strain DSM 16493 / NCIMB 14021 / DFL 12) protein is Aspartyl/glutamyl-tRNA(Asn/Gln) amidotransferase subunit B.